The chain runs to 146 residues: MHPKRKKRLLIVLAGLAVVAVASGLILNAFRSNLVFFHTPTEIAAGQVDTDRVIRVGGLVEAGSVEREPGGLRVRFVITDTARSVPVRYEGILPDLFREGHGTVVQGRIGTDGVLAATQVLAKHDENYMPPEAADAIQRAGETVVQ.

Residues 1–8 lie on the Cytoplasmic side of the membrane; the sequence is MHPKRKKR. The helical; Signal-anchor for type II membrane protein transmembrane segment at 9-29 threads the bilayer; sequence LLIVLAGLAVVAVASGLILNA. Residues 30-146 lie on the Periplasmic side of the membrane; that stretch reads FRSNLVFFHT…IQRAGETVVQ (117 aa). 2 residues coordinate heme: H124 and Y128.

This sequence belongs to the CcmE/CycJ family.

It localises to the cell inner membrane. Its function is as follows. Heme chaperone required for the biogenesis of c-type cytochromes. Transiently binds heme delivered by CcmC and transfers the heme to apo-cytochromes in a process facilitated by CcmF and CcmH. The protein is Cytochrome c-type biogenesis protein CcmE of Laribacter hongkongensis (strain HLHK9).